The primary structure comprises 369 residues: Chaperone protein DnaJ (369 aa).

Positions 7-73 (DYYEILGVPR…QKRAMYDRFG (67 aa)) constitute a J domain. The CR-type zinc finger occupies 143–225 (GAEIPVEYER…CGGSGRVLRK (83 aa)). Zn(2+) is bound by residues Cys-156, Cys-159, Cys-173, Cys-176, Cys-199, Cys-202, Cys-213, and Cys-216. CXXCXGXG motif repeat units follow at residues 156 to 163 (CPRCGGTG), 173 to 180 (CPSCGGTG), 199 to 206 (CERCGGTG), and 213 to 220 (CHECGGSG).

It belongs to the DnaJ family. As to quaternary structure, homodimer. The cofactor is Zn(2+).

The protein localises to the cytoplasm. In terms of biological role, participates actively in the response to hyperosmotic and heat shock by preventing the aggregation of stress-denatured proteins and by disaggregating proteins, also in an autonomous, DnaK-independent fashion. Unfolded proteins bind initially to DnaJ; upon interaction with the DnaJ-bound protein, DnaK hydrolyzes its bound ATP, resulting in the formation of a stable complex. GrpE releases ADP from DnaK; ATP binding to DnaK triggers the release of the substrate protein, thus completing the reaction cycle. Several rounds of ATP-dependent interactions between DnaJ, DnaK and GrpE are required for fully efficient folding. Also involved, together with DnaK and GrpE, in the DNA replication of plasmids through activation of initiation proteins. This chain is Chaperone protein DnaJ, found in Thermotoga petrophila (strain ATCC BAA-488 / DSM 13995 / JCM 10881 / RKU-1).